A 487-amino-acid polypeptide reads, in one-letter code: MKPRMEYAPEFDNSYARQLSGFYTRLQPTPLKGARLLYHSKPLAQELGLDAHWFTEPKTAVWAGEALLPGMEPLAQVYSGHQFGMWAGQLGDGRGILLGEQRLNDGRYMDWHLKGAGLTPYSRMGDGRAVLRSVIREFLASEALHHLGIPTSRALTIVTSDHPIYREQTERGAMLLRVAESHIRFGHFEHFYYRQQPKQVQQLADYVIARHWPQWVGHQECYRLWFTDVVERTARLMAHWQTVGFAHGVMNTDNMSILGITMDYGPFGFLDDYVPGYICNHSDHQGRYAYDNQPAVALWNLHRLGHALSGLMSADQLQLALEAYEPALMVAYGEQMRAKLGFLERDSQDNDLLTGLLSLMIKEGRDYTRTFRLLSEVEVHSAQSPLRDDFIDRAAFDDWYRRYRSRLQQESIDDDQRQQSMKAANPKYILRNYLAQQAITQAEKDDIQPLQRLHQALQQPFTDQPEFDDLAALPPDWGKHLEISCSS.

ATP is bound by residues Gly91, Gly93, Arg94, Lys114, Asp126, Gly127, Arg177, and Arg184. The active-site Proton acceptor is Asp253. 2 residues coordinate Mg(2+): Asn254 and Asp263. An ATP-binding site is contributed by Asp263.

This sequence belongs to the SELO family. The cofactor is Mg(2+). Requires Mn(2+) as cofactor.

It catalyses the reaction L-seryl-[protein] + ATP = 3-O-(5'-adenylyl)-L-seryl-[protein] + diphosphate. The catalysed reaction is L-threonyl-[protein] + ATP = 3-O-(5'-adenylyl)-L-threonyl-[protein] + diphosphate. The enzyme catalyses L-tyrosyl-[protein] + ATP = O-(5'-adenylyl)-L-tyrosyl-[protein] + diphosphate. It carries out the reaction L-histidyl-[protein] + UTP = N(tele)-(5'-uridylyl)-L-histidyl-[protein] + diphosphate. It catalyses the reaction L-seryl-[protein] + UTP = O-(5'-uridylyl)-L-seryl-[protein] + diphosphate. The catalysed reaction is L-tyrosyl-[protein] + UTP = O-(5'-uridylyl)-L-tyrosyl-[protein] + diphosphate. In terms of biological role, nucleotidyltransferase involved in the post-translational modification of proteins. It can catalyze the addition of adenosine monophosphate (AMP) or uridine monophosphate (UMP) to a protein, resulting in modifications known as AMPylation and UMPylation. This Yersinia pestis (strain Pestoides F) protein is Protein nucleotidyltransferase YdiU.